The chain runs to 245 residues: Ribonuclease PH (245 aa).

Phosphate-binding positions include arginine 93 and 131–133; that span reads GTR.

This sequence belongs to the RNase PH family. Homohexameric ring arranged as a trimer of dimers.

The enzyme catalyses tRNA(n+1) + phosphate = tRNA(n) + a ribonucleoside 5'-diphosphate. Phosphorolytic 3'-5' exoribonuclease that plays an important role in tRNA 3'-end maturation. Removes nucleotide residues following the 3'-CCA terminus of tRNAs; can also add nucleotides to the ends of RNA molecules by using nucleoside diphosphates as substrates, but this may not be physiologically important. Probably plays a role in initiation of 16S rRNA degradation (leading to ribosome degradation) during starvation. This Corynebacterium glutamicum (strain ATCC 13032 / DSM 20300 / JCM 1318 / BCRC 11384 / CCUG 27702 / LMG 3730 / NBRC 12168 / NCIMB 10025 / NRRL B-2784 / 534) protein is Ribonuclease PH.